The following is a 165-amino-acid chain: NADPH-dependent 7-cyano-7-deazaguanine reductase (165 aa).

The Thioimide intermediate role is filled by cysteine 56. Aspartate 63 serves as the catalytic Proton donor. Substrate is bound by residues 78–80 (VES) and 97–98 (HE).

This sequence belongs to the GTP cyclohydrolase I family. QueF type 1 subfamily.

It is found in the cytoplasm. It catalyses the reaction 7-aminomethyl-7-carbaguanine + 2 NADP(+) = 7-cyano-7-deazaguanine + 2 NADPH + 3 H(+). Its pathway is tRNA modification; tRNA-queuosine biosynthesis. Catalyzes the NADPH-dependent reduction of 7-cyano-7-deazaguanine (preQ0) to 7-aminomethyl-7-deazaguanine (preQ1). The protein is NADPH-dependent 7-cyano-7-deazaguanine reductase of Geobacillus thermodenitrificans (strain NG80-2).